A 284-amino-acid polypeptide reads, in one-letter code: Tropomyosin-1 (284 aa).

Disordered stretches follow at residues 1–26 (MDAI…DTCE) and 96–124 (EEDL…DENN). Residues 1–276 (MDAIKKKMQA…YKSLADEMDS (276 aa)) adopt a coiled-coil conformation. Residues 12-26 (KLEKDNAMDKADTCE) show a composition bias toward basic and acidic residues. Over residues 107–121 (GTAQQKLLEAQQSAD) the composition is skewed to polar residues.

This sequence belongs to the tropomyosin family. In terms of assembly, homodimer.

Tropomyosin, in association with the troponin complex, plays a central role in the calcium dependent regulation of muscle contraction. In Bombyx mori (Silk moth), this protein is Tropomyosin-1.